An 847-amino-acid chain; its full sequence is B-cell receptor CD22 (847 aa).

A signal peptide spans 1–19; sequence MHLLGPWLLLLVLEYLAFS. The 119-residue stretch at 20 to 138 folds into the Ig-like V-type domain; the sequence is DSSKWAFEHP…MERIHLNVSE (119 aa). At 20–687 the chain is on the extracellular side; it reads DSSKWAFEHP…YYSPETIGRR (668 aa). N-linked (GlcNAc...) asparagine glycosylation is found at asparagine 67, asparagine 101, and asparagine 112. Arginine 120 serves as a coordination point for N-acetylneuraminate. 3 N-linked (GlcNAc...) asparagine glycosylation sites follow: asparagine 135, asparagine 164, and asparagine 231. 6 consecutive Ig-like C2-type domains span residues 143 to 235, 242 to 326, 331 to 416, 419 to 500, 505 to 582, and 593 to 676; these read PHIQ…DTVQ, PKLE…VFLQ, PEPS…LDVQ, PKKV…VALN, PRDV…QTAS, and PRRL…STLT. Cysteine 161 and cysteine 219 are oxidised to a cystine. 2 disulfide bridges follow: cysteine 265/cysteine 309 and cysteine 353/cysteine 396. 5 N-linked (GlcNAc...) asparagine glycosylation sites follow: asparagine 363, asparagine 428, asparagine 445, asparagine 448, and asparagine 479. Disulfide bonds link cysteine 442–cysteine 484 and cysteine 529–cysteine 571. N-linked (GlcNAc...) asparagine glycosylation is found at asparagine 574 and asparagine 634. Cysteine 616 and cysteine 659 form a disulfide bridge. A helical transmembrane segment spans residues 688-708; it reads VAVGFGSCLAILILAICGLKL. Over 709–847 the chain is Cytoplasmic; it reads QRRWKRTQSQ…ENVDYVILKH (139 aa). 3 positions are modified to phosphoserine: serine 725, serine 726, and serine 729. 2 short sequence motifs (ITIM motif) span residues 760–765 and 794–799; these read ISYTTL and VTYSVL. Tyrosine 762 carries the phosphotyrosine modification. Residues tyrosine 807, tyrosine 822, and tyrosine 842 each carry the phosphotyrosine modification. 2 short sequence motifs (ITIM motif) span residues 820 to 825 and 840 to 845; these read IHYSEL and VDYVIL.

It belongs to the immunoglobulin superfamily. SIGLEC (sialic acid binding Ig-like lectin) family. As to quaternary structure, predominantly monomer of isoform CD22-beta. Also found as heterodimer of isoform CD22-beta and a shorter isoform. Interacts with PTPN6/SHP-1, LYN, SYK, PIK3R1/PIK3R2 and PLCG1 upon phosphorylation. Interacts with GRB2, INPP5D and SHC1 upon phosphorylation. May form a complex with INPP5D/SHIP, GRB2 and SHC1. Phosphorylation of Tyr-762, Tyr-807 and Tyr-822 are involved in binding to SYK, GRB2 and SYK, respectively. Phosphorylation of Tyr-842 is involved in binding to SYK, PLCG2 and PIK3R1/PIK3R2. In terms of processing, phosphorylated on tyrosine residues by LYN.

It localises to the cell membrane. In terms of biological role, most highly expressed siglec (sialic acid-binding immunoglobulin-like lectin) on B-cells that plays a role in various aspects of B-cell biology including differentiation, antigen presentation, and trafficking to bone marrow. Binds to alpha 2,6-linked sialic acid residues of surface molecules such as CD22 itself, CD45 and IgM in a cis configuration. Can also bind to ligands on other cells as an adhesion molecule in a trans configuration. Acts as an inhibitory coreceptor on the surface of B-cells and inhibits B-cell receptor induced signaling, characterized by inhibition of the calcium mobilization and cellular activation. Mechanistically, the immunoreceptor tyrosine-based inhibitory motif domain is phosphorylated by the Src kinase LYN, which in turn leads to the recruitment of the protein tyrosine phosphatase 1/PTPN6, leading to the negative regulation of BCR signaling. If this negative signaling from is of sufficient strength, apoptosis of the B-cell can be induced. This chain is B-cell receptor CD22, found in Pan paniscus (Pygmy chimpanzee).